Consider the following 532-residue polypeptide: Probable G-protein coupled receptor Mth-like 11 (532 aa).

Positions 1–20 (MGMFRVEYLLLGILVIGVRS) are cleaved as a signal peptide. The Extracellular portion of the chain corresponds to 21 to 229 (RDIPNCDFFD…VRKSRLSNAS (209 aa)). Disulfide bonds link C26/C80, C82/C87, C91/C184, C92/C103, and C145/C204. N42 carries an N-linked (GlcNAc...) asparagine glycan. 5 N-linked (GlcNAc...) asparagine glycosylation sites follow: N110, N123, N166, N195, and N227. A helical transmembrane segment spans residues 230 to 250 (IPVKFSSVFFMVITIAAYLWL). Residues 251 to 262 (PKFRSLHGKCCN) lie on the Cytoplasmic side of the membrane. The chain crosses the membrane as a helical span at residues 263–283 (LYFICLAITFLLNVISLFGIF). The Extracellular segment spans residues 284-290 (ELKTPIC). A helical membrane pass occupies residues 291–311 (YLTGYAGYFTVMATFLWLSVI). Residues 312 to 339 (SFDVWRRFAMRKFQVFYKNKRSSFFNYN) are Cytoplasmic-facing. A helical transmembrane segment spans residues 340–360 (IIVWSSAGLLTCIIFLVDQFV). Residues 361 to 386 (ETNLDNPYNPAVGVFSCWIFTNGWSA) lie on the Extracellular side of the membrane. The chain crosses the membrane as a helical span at residues 387–407 (TFYFYAPLAILIILNCASFFL). At 408–439 (TTRYIYVENKQNQKVLNNSEPQKLSRNHANYR) the chain is on the cytoplasmic side. Residues 440–460 (IYFRLFIIMGGSWFLEIIAFI) traverse the membrane as a helical segment. The Extracellular segment spans residues 461 to 469 (CEMENMWKP). Residues 470-490 (LIILNDYINCSQGIIIFVATF) form a helical membrane-spanning segment. At 491-532 (CNHEMFRLIRKRIQNRNITSLELTNTSRPVESEKMADVELGK) the chain is on the cytoplasmic side.

This sequence belongs to the G-protein coupled receptor 2 family. Mth subfamily.

It is found in the cell membrane. The chain is Probable G-protein coupled receptor Mth-like 11 (mthl11) from Drosophila melanogaster (Fruit fly).